The following is a 315-amino-acid chain: Aspartate carbamoyltransferase catalytic subunit (315 aa).

The carbamoyl phosphate site is built by Arg-61 and Thr-62. Lys-90 is an L-aspartate binding site. Residues Arg-111, His-139, and Gln-142 each coordinate carbamoyl phosphate. The L-aspartate site is built by Arg-172 and Arg-234. Leu-274 and Pro-275 together coordinate carbamoyl phosphate.

Belongs to the aspartate/ornithine carbamoyltransferase superfamily. ATCase family. In terms of assembly, heterooligomer of catalytic and regulatory chains.

The catalysed reaction is carbamoyl phosphate + L-aspartate = N-carbamoyl-L-aspartate + phosphate + H(+). The protein operates within pyrimidine metabolism; UMP biosynthesis via de novo pathway; (S)-dihydroorotate from bicarbonate: step 2/3. In terms of biological role, catalyzes the condensation of carbamoyl phosphate and aspartate to form carbamoyl aspartate and inorganic phosphate, the committed step in the de novo pyrimidine nucleotide biosynthesis pathway. The polypeptide is Aspartate carbamoyltransferase catalytic subunit (Hyperthermus butylicus (strain DSM 5456 / JCM 9403 / PLM1-5)).